Reading from the N-terminus, the 461-residue chain is D-phenylhydantoinase (461 aa).

Residues His-59, His-61, and Lys-151 each contribute to the a divalent metal cation site. Lys-151 carries the post-translational modification N6-carboxylysine. Tyr-156 lines the substrate pocket. A divalent metal cation is bound by residues His-182 and His-239. Ser-286 contributes to the substrate binding site. Residue Asp-313 participates in a divalent metal cation binding. A substrate-binding site is contributed by Asn-335.

The protein belongs to the metallo-dependent hydrolases superfamily. Hydantoinase/dihydropyrimidinase family. As to quaternary structure, homotetramer. The cofactor is a divalent metal cation. Post-translationally, carboxylation allows a single lysine to coordinate two divalent metal cations.

It catalyses the reaction D-5-phenylhydantoin + H2O = N-carbamoyl-D-phenylglycine + H(+). Functionally, catalyzes the stereospecific hydrolysis of the cyclic amide bond of D-hydantoin derivatives with an aromatic side chains at the 5'-position. Has no activity on dihydropyrimidines. The physiological function is unknown. This is D-phenylhydantoinase from Escherichia coli (strain 55989 / EAEC).